The chain runs to 740 residues: 1,4-alpha-glucan branching enzyme GlgB (740 aa).

The active-site Nucleophile is the D419. The Proton donor role is filled by E472.

It belongs to the glycosyl hydrolase 13 family. GlgB subfamily. In terms of assembly, monomer.

The catalysed reaction is Transfers a segment of a (1-&gt;4)-alpha-D-glucan chain to a primary hydroxy group in a similar glucan chain.. Its pathway is glycan biosynthesis; glycogen biosynthesis. Functionally, catalyzes the formation of the alpha-1,6-glucosidic linkages in glycogen by scission of a 1,4-alpha-linked oligosaccharide from growing alpha-1,4-glucan chains and the subsequent attachment of the oligosaccharide to the alpha-1,6 position. The protein is 1,4-alpha-glucan branching enzyme GlgB of Paramagnetospirillum magneticum (strain ATCC 700264 / AMB-1) (Magnetospirillum magneticum).